Reading from the N-terminus, the 382-residue chain is Mannitol-1-phosphate 5-dehydrogenase (382 aa).

Residue 3–14 (ALHFGAGNIGRG) coordinates NAD(+).

Belongs to the mannitol dehydrogenase family.

The catalysed reaction is D-mannitol 1-phosphate + NAD(+) = beta-D-fructose 6-phosphate + NADH + H(+). The protein is Mannitol-1-phosphate 5-dehydrogenase of Erwinia tasmaniensis (strain DSM 17950 / CFBP 7177 / CIP 109463 / NCPPB 4357 / Et1/99).